The primary structure comprises 452 residues: Solute carrier family 52, riboflavin transporter, member 3-B (452 aa).

Transmembrane regions (helical) follow at residues L11 to V31, W38 to I58, P73 to W93, L111 to M131, and L138 to V158. N168, N174, N179, and N193 each carry an N-linked (GlcNAc...) asparagine glycan. Transmembrane regions (helical) follow at residues F199–L219, V285–V305, A321–I341, L344–M364, A381–I401, and A412–F432.

The protein belongs to the riboflavin transporter family.

The protein resides in the cell membrane. It carries out the reaction riboflavin(in) = riboflavin(out). Plasma membrane transporter mediating the uptake by cells of the water soluble vitamin B2/riboflavin that plays a key role in biochemical oxidation-reduction reactions of the carbohydrate, lipid, and amino acid metabolism. The protein is Solute carrier family 52, riboflavin transporter, member 3-B (slc52a3b) of Danio rerio (Zebrafish).